We begin with the raw amino-acid sequence, 137 residues long: MLVVLLTAALLALSSAQNTDEEVSNAEISDVKQQPDSDSDLPSDDVNPGNVQDHESAPAANEEPSVSPGNEQEEQQQQPLPVENQEPSDKERHRKQKRPPPETLHHRENLRPQIYRQFGIRPFGSLFPEPYRFQPWA.

An N-terminal signal peptide occupies residues 1-18 (MLVVLLTAALLALSSAQN). Positions 14–113 (SSAQNTDEEV…LHHRENLRPQ (100 aa)) are disordered. Low complexity predominate over residues 75 to 85 (QQQQPLPVENQ). The span at 99–110 (PPPETLHHRENL) shows a compositional bias: basic and acidic residues.

The protein localises to the secreted. In terms of biological role, unknown, male-specific function. The protein is SMR2 protein (Smr2) of Rattus norvegicus (Rat).